The primary structure comprises 341 residues: Phosphoribosylformylglycinamidine cyclo-ligase (341 aa).

It belongs to the AIR synthase family.

The protein resides in the cytoplasm. The enzyme catalyses 2-formamido-N(1)-(5-O-phospho-beta-D-ribosyl)acetamidine + ATP = 5-amino-1-(5-phospho-beta-D-ribosyl)imidazole + ADP + phosphate + H(+). It participates in purine metabolism; IMP biosynthesis via de novo pathway; 5-amino-1-(5-phospho-D-ribosyl)imidazole from N(2)-formyl-N(1)-(5-phospho-D-ribosyl)glycinamide: step 2/2. This chain is Phosphoribosylformylglycinamidine cyclo-ligase, found in Alkaliphilus oremlandii (strain OhILAs) (Clostridium oremlandii (strain OhILAs)).